The sequence spans 931 residues: Short transient receptor potential channel 6 (931 aa).

Positions 1 to 23 (MSQSPAFGPRRGSSPRGAAGAAA) are enriched in low complexity. The interval 1-26 (MSQSPAFGPRRGSSPRGAAGAAARRN) is disordered. The Cytoplasmic segment spans residues 1 to 438 (MSQSPAFGPR…CSKMGKIMRG (438 aa)). ANK repeat units lie at residues 97–126 (IEEE…SLNV), 132–161 (MGQN…LSRV), 163–189 (DALL…FAEG), and 218–247 (HDVT…RIER). A helical transmembrane segment spans residues 439–459 (PFMKFVAHAASFTIFLGLLVM). The Extracellular segment spans residues 460–487 (NAADRFEGTKLLPNETSTDNAKQLFRMK). Asn473 carries N-linked (GlcNAc...) asparagine glycosylation. A helical transmembrane segment spans residues 488–508 (TSCFSWMEMLIISWVIGMIWA). The Cytoplasmic segment spans residues 509 to 521 (ECKEIWTQGPKEY). The helical transmembrane segment at 522-542 (LFELWNMLDFGMLAIFAASFI) threads the bilayer. The Extracellular segment spans residues 543 to 592 (ARFMAFWHASKAQSIIDANDTLKDLTKVTLGDNVKYYNLARIKWDPSDPQ). Residue Asn561 is glycosylated (N-linked (GlcNAc...) asparagine). Residues 593 to 613 (IISEGLYAIAVVLSFSRIAYI) traverse the membrane as a helical segment. Topologically, residues 614 to 636 (LPANESFGPLQISLGRTVKDIFK) are cytoplasmic. A helical membrane pass occupies residues 637 to 657 (FMVIFIMVFVAFMIGMFNLYS). Topologically, residues 658 to 706 (YYIGAKQNEAFTTVEESFKTLFWAIFGLSEVKSVVINYNHKFIENIGYV) are extracellular. The helical transmembrane segment at 707–727 (LYGVYNVTMVIVLLNMLIAMI) threads the bilayer. The Cytoplasmic portion of the chain corresponds to 728 to 931 (NSSFQEIEDD…MEPNQEETNR (204 aa)). A Phosphoserine modification is found at Ser815.

It belongs to the transient receptor (TC 1.A.4) family. STrpC subfamily. TRPC6 sub-subfamily. As to quaternary structure, homodimer; forms channel complex. Interacts with MX1 and RNF24. Phosphorylated by FYN, leading to an increase of TRPC6 channel activity. Expressed primarily in placenta, lung, spleen, ovary and small intestine. Expressed in podocytes and is a component of the glomerular slit diaphragm.

It is found in the cell membrane. It carries out the reaction Ca(2+)(in) = Ca(2+)(out). Activated by diacylglycerol (DAG) in a membrane-delimited fashion, independently of protein kinase C. In terms of biological role, forms a receptor-activated non-selective calcium permeant cation channel. Probably is operated by a phosphatidylinositol second messenger system activated by receptor tyrosine kinases or G-protein coupled receptors. Activated by diacylglycerol (DAG) in a membrane-delimited fashion, independently of protein kinase C. Seems not to be activated by intracellular calcium store depletion. The protein is Short transient receptor potential channel 6 of Homo sapiens (Human).